A 541-amino-acid chain; its full sequence is MGCIKSKENKSPAIKYTPENPTEPVNTSAGHYGVEHATAATTSSTKGASANFNSLSMTPFGGSSGVTPFGGASSSFSVVPSSYPTSLTGGVTIFVALYDYEARTTEDLSFKKGERFQIINNTEGDWWEARSIATGKNGYIPSNYVAPADSIQAEEWYFGKMGRKDAERLLLNPGNQRGIFLVRESETTKGAYSLSIRDWDEVRGDNVKHYKIRKLDNGGYYITTRAQFDTLQKLVKHYTEHADGLCHKLTTVCPTVKPQTQGLAKDAWEIPRESLRLEVKLGQGCFGEVWMGTWNGTTKVAIKTLKPGTMMPEAFLQEAQIMKKLRHDKLVPLYAVVSEEPIYIVTEFMSKGILLDFLKEGDGKYLKLPQLVDMAAQIADGMAYIERMNYIHRDLRAANILVGENLVCKIADFGLARLIEDNEYTARQGAKFPIKWTAPEAALYGRFTIKSDVWSFGILQTELVTKGRVPYPGMVNREVLEQVERGYRMPCPQGCPESLHELMNLCWKKDPDERPTFEYIQSFLEDYFTATEPQYQPGENL.

Residues 1 to 10 (MGCIKSKENK) show a composition bias toward basic and acidic residues. Residues 1–29 (MGCIKSKENKSPAIKYTPENPTEPVNTSA) are disordered. Residue Gly-2 is the site of N-myristoyl glycine attachment. A lipid anchor (S-palmitoyl cysteine; in membrane form) is attached at Cys-3. Positions 19–29 (ENPTEPVNTSA) are enriched in polar residues. Tyr-32 carries the post-translational modification Phosphotyrosine. Residues 89-150 (GGVTIFVALY…PSNYVAPADS (62 aa)) enclose the SH3 domain. Positions 156–253 (WYFGKMGRKD…GLCHKLTTVC (98 aa)) constitute an SH2 domain. The Protein kinase domain maps to 275-528 (LRLEVKLGQG…YIQSFLEDYF (254 aa)). ATP contacts are provided by residues 281–289 (LGQGCFGEV) and Lys-303. 2 positions are modified to phosphotyrosine: Tyr-334 and Tyr-343. Residue Asp-394 is the Proton acceptor of the active site. Residue Tyr-424 is modified to Phosphotyrosine; by autocatalysis. Phosphotyrosine is present on Tyr-535.

In terms of assembly, interacts with YAP1 and CSF1R. Interacts with FASLG. Interacts with CTNND1; this interaction allows YES1-mediated activation of FYN and FER and subsequent phosphorylation of CTNND1. Interacts with IL6ST/gp130. Interacts with SCRIB, when YES1 is in a closed conformation; the interaction facilitates YES1 autophosphorylation. Post-translationally, phosphorylated. Phosphorylation by CSK on the C-terminal tail maintains the enzyme in an inactive state. Autophosphorylation at Tyr-424 maintains enzyme activity by blocking CSK-mediated inhibition. Palmitoylation at Cys-3 promotes membrane localization.

The protein localises to the cell membrane. Its subcellular location is the cytoplasm. The protein resides in the cytoskeleton. It is found in the microtubule organizing center. It localises to the centrosome. The protein localises to the cytosol. Its subcellular location is the cell junction. The catalysed reaction is L-tyrosyl-[protein] + ATP = O-phospho-L-tyrosyl-[protein] + ADP + H(+). Its function is as follows. Non-receptor protein tyrosine kinase that is involved in the regulation of cell growth and survival, apoptosis, cell-cell adhesion, cytoskeleton remodeling, and differentiation. Stimulation by receptor tyrosine kinases (RTKs) including EGFR, PDGFR, CSF1R and FGFR leads to recruitment of YES1 to the phosphorylated receptor, and activation and phosphorylation of downstream substrates. Upon EGFR activation, promotes the phosphorylation of PARD3 to favor epithelial tight junction assembly. Participates in the phosphorylation of specific junctional components such as CTNND1 by stimulating the FYN and FER tyrosine kinases at cell-cell contacts. Upon T-cell stimulation by CXCL12, phosphorylates collapsin response mediator protein 2/DPYSL2 and induces T-cell migration. Participates in CD95L/FASLG signaling pathway and mediates AKT-mediated cell migration. Plays a role in cell cycle progression by phosphorylating the cyclin dependent kinase 4/CDK4 thus regulating the G1 phase. Also involved in G2/M progression and cytokinesis. Catalyzes phosphorylation of organic cation transporter OCT2 which induces its transport activity. In Rattus norvegicus (Rat), this protein is Tyrosine-protein kinase Yes (Yes1).